The primary structure comprises 365 residues: Validamycin A dioxygenase (365 aa).

The Fe2OG dioxygenase domain maps to 174–284; that stretch reads HATWTQSVNW…LVSLVYFFDA (111 aa). Residues His203, Asp205, and His261 each contribute to the Fe cation site. The tract at residues 331 to 365 is disordered; sequence GELSLSRPGSADSPGSSPADDHPSRPGRHPAQGPQ. Positions 336–348 are enriched in low complexity; the sequence is SRPGSADSPGSSP.

Belongs to the iron/ascorbate-dependent oxidoreductase family. It depends on Fe(2+) as a cofactor.

The enzyme catalyses validamycin A + 2-oxoglutarate + O2 = validamycin B + succinate + CO2 + H(+). The catalysed reaction is validoxylamine A + 2-oxoglutarate + O2 = validoxylamine B + succinate + CO2 + H(+). It participates in antibiotic biosynthesis. Its function is as follows. Involved in the biosynthesis of validamycin B, a component of the antifungal and antibiotic validamycin complex used as a crop protectant. Catalyzes the regioselective hydroxylation of validamycin A (4-O-beta-D-glucopyranosyl-validoxylamine A) at the C-6 position to yield validamycin B. To a lesser extent, also able to convert validoxylamine A to its hydroxylated derivative. The protein is Validamycin A dioxygenase of Streptomyces hygroscopicus subsp. limoneus.